The primary structure comprises 344 residues: tRNA N6-adenosine threonylcarbamoyltransferase (344 aa).

Fe cation is bound by residues histidine 111 and histidine 115. Substrate-binding positions include 134–138 (LVSGG), aspartate 167, glycine 180, aspartate 184, and asparagine 277. A Fe cation-binding site is contributed by aspartate 305.

It belongs to the KAE1 / TsaD family. It depends on Fe(2+) as a cofactor.

It is found in the cytoplasm. The enzyme catalyses L-threonylcarbamoyladenylate + adenosine(37) in tRNA = N(6)-L-threonylcarbamoyladenosine(37) in tRNA + AMP + H(+). Its function is as follows. Required for the formation of a threonylcarbamoyl group on adenosine at position 37 (t(6)A37) in tRNAs that read codons beginning with adenine. Is involved in the transfer of the threonylcarbamoyl moiety of threonylcarbamoyl-AMP (TC-AMP) to the N6 group of A37, together with TsaE and TsaB. TsaD likely plays a direct catalytic role in this reaction. In Microcystis aeruginosa (strain NIES-843 / IAM M-2473), this protein is tRNA N6-adenosine threonylcarbamoyltransferase.